Consider the following 412-residue polypeptide: Putative potassium channel protein RPA4233 (412 aa).

The next 5 membrane-spanning stretches (helical) occupy residues 35-55, 65-85, 164-184, 202-222, and 225-245; these read FIVF…VPAM, ALEL…IWIA, LMAC…AMHI, WWAI…ATGI, and MVAS…VGIV. Residues 210 to 215 carry the Selectivity filter motif; sequence TIGYGD. 270-388 provides a ligand contact to a nucleoside 3',5'-cyclic phosphate; sequence LFSHLTAGDI…RKINQIVEGR (119 aa).

The protein belongs to the potassium channel family.

The protein resides in the cell membrane. This Rhodopseudomonas palustris (strain ATCC BAA-98 / CGA009) protein is Putative potassium channel protein RPA4233.